A 227-amino-acid polypeptide reads, in one-letter code: Cytochrome c oxidase subunit 2 (227 aa).

At 1 to 14 (MAYPFQLGFQDATS) the chain is on the mitochondrial intermembrane side. Residues 15–45 (PIMEELLHFHDHTLMIVFLISSLVLYIISSM) form a helical membrane-spanning segment. Topologically, residues 46–59 (LTTKLTHTSTMDAQ) are mitochondrial matrix. A helical membrane pass occupies residues 60–87 (EVETIWTILPAIILILIALPSLRILYMM). At 88-227 (DEINNPSLTV…YFEEWSASML (140 aa)) the chain is on the mitochondrial intermembrane side. Cu cation is bound by residues H161, C196, E198, C200, H204, and M207. Residue E198 participates in Mg(2+) binding.

The protein belongs to the cytochrome c oxidase subunit 2 family. As to quaternary structure, component of the cytochrome c oxidase (complex IV, CIV), a multisubunit enzyme composed of 14 subunits. The complex is composed of a catalytic core of 3 subunits MT-CO1, MT-CO2 and MT-CO3, encoded in the mitochondrial DNA, and 11 supernumerary subunits COX4I, COX5A, COX5B, COX6A, COX6B, COX6C, COX7A, COX7B, COX7C, COX8 and NDUFA4, which are encoded in the nuclear genome. The complex exists as a monomer or a dimer and forms supercomplexes (SCs) in the inner mitochondrial membrane with NADH-ubiquinone oxidoreductase (complex I, CI) and ubiquinol-cytochrome c oxidoreductase (cytochrome b-c1 complex, complex III, CIII), resulting in different assemblies (supercomplex SCI(1)III(2)IV(1) and megacomplex MCI(2)III(2)IV(2)). Found in a complex with TMEM177, COA6, COX18, COX20, SCO1 and SCO2. Interacts with TMEM177 in a COX20-dependent manner. Interacts with COX20. Interacts with COX16. It depends on Cu cation as a cofactor.

The protein localises to the mitochondrion inner membrane. It carries out the reaction 4 Fe(II)-[cytochrome c] + O2 + 8 H(+)(in) = 4 Fe(III)-[cytochrome c] + 2 H2O + 4 H(+)(out). Functionally, component of the cytochrome c oxidase, the last enzyme in the mitochondrial electron transport chain which drives oxidative phosphorylation. The respiratory chain contains 3 multisubunit complexes succinate dehydrogenase (complex II, CII), ubiquinol-cytochrome c oxidoreductase (cytochrome b-c1 complex, complex III, CIII) and cytochrome c oxidase (complex IV, CIV), that cooperate to transfer electrons derived from NADH and succinate to molecular oxygen, creating an electrochemical gradient over the inner membrane that drives transmembrane transport and the ATP synthase. Cytochrome c oxidase is the component of the respiratory chain that catalyzes the reduction of oxygen to water. Electrons originating from reduced cytochrome c in the intermembrane space (IMS) are transferred via the dinuclear copper A center (CU(A)) of subunit 2 and heme A of subunit 1 to the active site in subunit 1, a binuclear center (BNC) formed by heme A3 and copper B (CU(B)). The BNC reduces molecular oxygen to 2 water molecules using 4 electrons from cytochrome c in the IMS and 4 protons from the mitochondrial matrix. The polypeptide is Cytochrome c oxidase subunit 2 (MT-CO2) (Equus asinus (Donkey)).